Here is a 112-residue protein sequence, read N- to C-terminus: Protein Churchill (112 aa).

Residues Cys2, Cys5, Cys30, Cys33, His59, Cys61, Cys64, His66, His71, Cys88, and Cys91 each coordinate Zn(2+).

The protein belongs to the Churchill family.

Functionally, transcriptional activator that mediates FGF signaling during neural development. Plays a role in the regulation of cell movement. Its function is as follows. Does not bind DNA by itself. The protein is Protein Churchill (CHURC1) of Homo sapiens (Human).